The primary structure comprises 375 residues: N5-carboxyaminoimidazole ribonucleotide synthase (375 aa).

ATP contacts are provided by residues Arg-108, Lys-148, 153–159 (GYDGKGQ), 183–186 (EQYL), Glu-191, His-214, and 266–267 (NE). The ATP-grasp domain occupies 112 to 296 (KQTLLEANTQ…QFDTHILAIT (185 aa)).

Belongs to the PurK/PurT family. Homodimer.

It catalyses the reaction 5-amino-1-(5-phospho-beta-D-ribosyl)imidazole + hydrogencarbonate + ATP = 5-carboxyamino-1-(5-phospho-D-ribosyl)imidazole + ADP + phosphate + 2 H(+). It participates in purine metabolism; IMP biosynthesis via de novo pathway; 5-amino-1-(5-phospho-D-ribosyl)imidazole-4-carboxylate from 5-amino-1-(5-phospho-D-ribosyl)imidazole (N5-CAIR route): step 1/2. Catalyzes the ATP-dependent conversion of 5-aminoimidazole ribonucleotide (AIR) and HCO(3)(-) to N5-carboxyaminoimidazole ribonucleotide (N5-CAIR). This Staphylococcus epidermidis (strain ATCC 35984 / DSM 28319 / BCRC 17069 / CCUG 31568 / BM 3577 / RP62A) protein is N5-carboxyaminoimidazole ribonucleotide synthase.